The sequence spans 159 residues: MKIAVYPGSFDPITNGHLDIIERGSKVFDKLIIGVLVNVDKKGLFEIEERVELIKKVTKHIKNVEVLSFNGLLIDFLKASNAKIILKGLRAVSDFEYEFKMALMNNKLDPDIETVFMMTSAQYSYLSSSSVKQVAKFGGCIEGLVPKEIISDVIRRSKI.

S9 is a substrate binding site. Residues 9–10 and H17 each bind ATP; that span reads SF. Substrate contacts are provided by K41, L73, and K87. Residues 88-90, E98, and 123-129 each bind ATP; these read GLR and YSYLSSS.

It belongs to the bacterial CoaD family. In terms of assembly, homohexamer. Requires Mg(2+) as cofactor.

Its subcellular location is the cytoplasm. It catalyses the reaction (R)-4'-phosphopantetheine + ATP + H(+) = 3'-dephospho-CoA + diphosphate. Its pathway is cofactor biosynthesis; coenzyme A biosynthesis; CoA from (R)-pantothenate: step 4/5. Reversibly transfers an adenylyl group from ATP to 4'-phosphopantetheine, yielding dephospho-CoA (dPCoA) and pyrophosphate. In Clostridium botulinum (strain Eklund 17B / Type B), this protein is Phosphopantetheine adenylyltransferase.